Here is a 321-residue protein sequence, read N- to C-terminus: uncharacterized protein (321 aa).

A signal peptide spans 1–18; sequence MKKMKKLLLLLSASFAFS.

This is an uncharacterized protein from Aquifex aeolicus (strain VF5).